The chain runs to 580 residues: YTH domain-containing family protein 2 (580 aa).

Positions 1 to 45 (MSASSLLEQRPKGQGNKVQNGSVHQKDGLNDDDFEPYLSPQARPN) are disordered. Residue Ser-2 is modified to N-acetylserine. Residues Ser-2, Ser-4, Ser-5, Ser-22, Ser-39, and Ser-196 each carry the phosphoserine modification. The localization to mRNA processing bodies (P-bodies) stretch occupies residues 2 to 385 (SASSLLEQRP…QAGSGSTPSE (384 aa)). The segment at 247 to 388 (AKQQPKLKTK…SGSTPSEPHP (142 aa)) is disordered. The span at 291-317 (ALVQNIGQQPTQGSPQPVGQQANNSPP) shows a compositional bias: polar residues. Residues 338–350 (AQLSVQQQAAQPT) show a composition bias toward low complexity. At Ser-360 the chain carries Phosphoserine. Residues 360–372 (SGFGHNGVDGNGV) are compositionally biased toward gly residues. Residues 373–384 (GQTQAGSGSTPS) are compositionally biased toward polar residues. Positions 386 to 580 (PHPVLEKLRS…VKKERQGRGK (195 aa)) are interaction with m6A-containing mRNAs. Ser-395 is modified (phosphoserine). The 135-residue stretch at 411-545 (GRVFIIKSYS…EKAKQVLKII (135 aa)) folds into the YTH domain. Residues 417 to 419 (KSY), Asp-423, 433 to 434 (WC), Asn-463, Trp-487, and Trp-492 each bind RNA.

Belongs to the YTHDF family. YTHDF2 subfamily. In terms of assembly, interacts with CNOT1; interaction is direct and promotes recruitment of the CCR4-NOT complex. Interacts with YTHDF3. Interacts with RIDA/HRSP12; interaction leads to recruitment of the ribonuclease P/MRP complex. In terms of processing, ubiquitinated by the SCF(SKP2) complex, leading to its degradation.

It is found in the cytoplasm. It localises to the cytosol. The protein localises to the P-body. The protein resides in the stress granule. Its subcellular location is the nucleus. Functionally, specifically recognizes and binds N6-methyladenosine (m6A)-containing RNAs, and regulates their stability. M6A is a modification present at internal sites of mRNAs and some non-coding RNAs and plays a role in mRNA stability and processing. Acts as a regulator of mRNA stability by promoting degradation of m6A-containing mRNAs via interaction with the CCR4-NOT and ribonuclease P/MRP complexes, depending on the context. The YTHDF paralogs (YTHDF1, YTHDF2 and YTHDF3) share m6A-containing mRNAs targets and act redundantly to mediate mRNA degradation and cellular differentiation. M6A-containing mRNAs containing a binding site for RIDA/HRSP12 (5'-GGUUC-3') are preferentially degraded by endoribonucleolytic cleavage: cooperative binding of RIDA/HRSP12 and YTHDF2 to transcripts leads to recruitment of the ribonuclease P/MRP complex. Other m6A-containing mRNAs undergo deadenylation via direct interaction between YTHDF2 and CNOT1, leading to recruitment of the CCR4-NOT and subsequent deadenylation of m6A-containing mRNAs. Required maternally to regulate oocyte maturation: probably acts by binding to m6A-containing mRNAs, thereby regulating maternal transcript dosage during oocyte maturation, which is essential for the competence of oocytes to sustain early zygotic development. Also required during spermatogenesis: regulates spermagonial adhesion by promoting degradation of m6A-containing transcripts coding for matrix metallopeptidases. Also involved in hematopoietic stem cells specification by binding to m6A-containing mRNAs, leading to promote their degradation. Also acts as a regulator of neural development by promoting m6A-dependent degradation of neural development-related mRNA targets. Inhibits neural specification of induced pluripotent stem cells by binding to methylated neural-specific mRNAs and promoting their degradation, thereby restraining neural differentiation. Regulates circadian regulation of hepatic lipid metabolism: acts by promoting m6A-dependent degradation of PPARA transcripts. Regulates the innate immune response to infection by inhibiting the type I interferon response: acts by binding to m6A-containing IFNB transcripts and promoting their degradation. May also act as a promoter of cap-independent mRNA translation following heat shock stress: upon stress, relocalizes to the nucleus and specifically binds mRNAs with some m6A methylation mark at their 5'-UTR, protecting demethylation of mRNAs by FTO, thereby promoting cap-independent mRNA translation. Regulates mitotic entry by promoting the phase-specific m6A-dependent degradation of WEE1 transcripts. Promotes formation of phase-separated membraneless compartments, such as P-bodies or stress granules, by undergoing liquid-liquid phase separation upon binding to mRNAs containing multiple m6A-modified residues: polymethylated mRNAs act as a multivalent scaffold for the binding of YTHDF proteins, juxtaposing their disordered regions and thereby leading to phase separation. The resulting mRNA-YTHDF complexes then partition into different endogenous phase-separated membraneless compartments, such as P-bodies, stress granules or neuronal RNA granules. May also recognize and bind RNAs modified by C5-methylcytosine (m5C) and act as a regulator of rRNA processing. The protein is YTH domain-containing family protein 2 of Bos taurus (Bovine).